Reading from the N-terminus, the 149-residue chain is MEIVAENRKARFDYFVLQEYDAGMVLVGSEVKSLRQRKVNMGDAYVLEKDMELWIHNLHISEYNRADRKNHKPLRVRKLLLRKREIHKIAGNIKVSGLAVVPLMIFFNNKGIAKIKIAIVKGKKLYDKREAIKTRDWQREKSRISRREV.

This sequence belongs to the SmpB family.

Its subcellular location is the cytoplasm. Its function is as follows. Required for rescue of stalled ribosomes mediated by trans-translation. Binds to transfer-messenger RNA (tmRNA), required for stable association of tmRNA with ribosomes. tmRNA and SmpB together mimic tRNA shape, replacing the anticodon stem-loop with SmpB. tmRNA is encoded by the ssrA gene; the 2 termini fold to resemble tRNA(Ala) and it encodes a 'tag peptide', a short internal open reading frame. During trans-translation Ala-aminoacylated tmRNA acts like a tRNA, entering the A-site of stalled ribosomes, displacing the stalled mRNA. The ribosome then switches to translate the ORF on the tmRNA; the nascent peptide is terminated with the 'tag peptide' encoded by the tmRNA and targeted for degradation. The ribosome is freed to recommence translation, which seems to be the essential function of trans-translation. This Anaplasma marginale (strain St. Maries) protein is SsrA-binding protein.